A 688-amino-acid chain; its full sequence is Eukaryotic translation initiation factor 3 subunit B (688 aa).

A disordered region spans residues 1–32; sequence MAKKKGENYDSDGGDDQDYDEEPNFDDPEGFV. Over residues 9–32 the composition is skewed to acidic residues; it reads YDSDGGDDQDYDEEPNFDDPEGFV. The RRM domain maps to 57–141; the sequence is NVIVVDNIPV…HTLLVNLFSD (85 aa). WD repeat units lie at residues 208–246, 247–287, 291–329, 332–367, 440–482, and 527–572; these read RDRFTETYVKWSPLGTYIVTFHKQGVVIWGGSNFTKINK, FPHS…EKRS, DGTSNMSMFRWSHDDKYVARMGDNAIHVYETSTFYLLDK, IKVQGIRNFSWSPTDNIIAYWMSEDLEAPARVTLLE, EVKE…EPTM, and GDHF…KRVN. Positions 613–642 form a coiled coil; sequence RIRMTRASKELLEKRAKLREQFVEYRTKRV.

Belongs to the eIF-3 subunit B family. In terms of assembly, component of the eukaryotic translation initiation factor 3 (eIF-3) complex.

Its subcellular location is the cytoplasm. In terms of biological role, RNA-binding component of the eukaryotic translation initiation factor 3 (eIF-3) complex, which is involved in protein synthesis of a specialized repertoire of mRNAs and, together with other initiation factors, stimulates binding of mRNA and methionyl-tRNAi to the 40S ribosome. The eIF-3 complex specifically targets and initiates translation of a subset of mRNAs involved in cell proliferation. In Aedes aegypti (Yellowfever mosquito), this protein is Eukaryotic translation initiation factor 3 subunit B.